We begin with the raw amino-acid sequence, 299 residues long: Sulfate adenylyltransferase subunit 2 (299 aa).

Belongs to the PAPS reductase family. CysD subfamily. Sulfate-activating enzymes, NodP and NodQ, may be physically associated.

The catalysed reaction is sulfate + ATP + H(+) = adenosine 5'-phosphosulfate + diphosphate. Its function is as follows. Proposed to provide activated sulfate for transfer to nod factor. The chain is Sulfate adenylyltransferase subunit 2 (nodP) from Rhizobium tropici.